We begin with the raw amino-acid sequence, 168 residues long: Photosystem I assembly protein Ycf3 (168 aa).

TPR repeat units lie at residues 35 to 68, 72 to 105, and 120 to 153; these read AFTY…EIDP, SYIL…NPFL, and GEQA…TPGN.

This sequence belongs to the Ycf3 family.

It is found in the plastid. The protein resides in the chloroplast thylakoid membrane. In terms of biological role, essential for the assembly of the photosystem I (PSI) complex. May act as a chaperone-like factor to guide the assembly of the PSI subunits. The polypeptide is Photosystem I assembly protein Ycf3 (Phaseolus vulgaris (Kidney bean)).